The following is a 218-amino-acid chain: Recombination protein RecR (218 aa).

The C4-type zinc-finger motif lies at 56-71 (CRICCNISREEVCRIC). Residues 79 to 195 (STICVVEEPK…VVSRLASGMP (117 aa)) form the Toprim domain.

Belongs to the RecR family.

Its function is as follows. May play a role in DNA repair. It seems to be involved in an RecBC-independent recombinational process of DNA repair. It may act with RecF and RecO. In Corynebacterium diphtheriae (strain ATCC 700971 / NCTC 13129 / Biotype gravis), this protein is Recombination protein RecR.